Reading from the N-terminus, the 886-residue chain is Peptidyl-lysine N-acetyltransferase PatZ (886 aa).

Positions 487-523 (QPILQAYGMNTLPTWIASDSTEAVHIAEQIGYPVALK) constitute an ATP-grasp domain. An N-acetyltransferase domain is found at 726 to 881 (CLFRPILPED…GIVGLTLNLA (156 aa)).

This sequence in the N-terminal section; belongs to the acetate CoA ligase alpha subunit family. In the central section; belongs to the acetate CoA ligase beta subunit family. In terms of assembly, stable tetramer in solution. Oligomerizes to an octameric form by autoacetylation. In terms of processing, autoacetylated. Deacetylated by CobB.

It catalyses the reaction L-lysyl-[protein] + acetyl-CoA = N(6)-acetyl-L-lysyl-[protein] + CoA + H(+). Its function is as follows. Catalyzes the acetyl-CoA-dependent acetylation of lysine residues of a large number of target proteins. Acetylates RNase R in exponential phase cells and RNase II. Required for the glucose-dependent acetylation on multiple lysines of alpha, beta and beta' RNAP subunits. Also acetylates acetyl-coenzyme A synthetase (Acs) and the chromosomal replication initiator protein DnaA, and inhibits their activity. Overexpression leads to the acetylation of a large number of additional proteins and inhibits motility. The chain is Peptidyl-lysine N-acetyltransferase PatZ from Escherichia coli (strain K12).